The following is a 310-amino-acid chain: MSSKLLTIQLLEELVHAAELNQEGKTADYIPELANVNQELTAIAVQPLGEKTLAYSNNPLHPVTLQSTGKMIPLIGLLEEFGADQLFEWVKVEPSGDDFASITRLEQFGPKPSNPMLNAGAIALCSRIPGVGEQQFRWLEHWVQKLFNQRLSINPLVFASEKRTGNRNRALAYLLKSRNNLGADVHETLDLYFALCSYEAMLDQMLYLPAVLANRGQDPDTGEQILSIETCKITLAIMATCGLYDETGTHMVKTGMPAKSGVSGYTIAVVPGKAGIVVLSPRVNAKGNSIRGEIMLEGLSKAMGWHFALP.

7 residues coordinate substrate: Ser-67, Asn-118, Glu-161, Asn-168, Tyr-192, Tyr-244, and Val-262.

Belongs to the glutaminase family. As to quaternary structure, homotetramer.

The catalysed reaction is L-glutamine + H2O = L-glutamate + NH4(+). This Legionella pneumophila (strain Corby) protein is Glutaminase.